Consider the following 472-residue polypeptide: Siroheme synthase 1 (472 aa).

A precorrin-2 dehydrogenase /sirohydrochlorin ferrochelatase region spans residues 1-203; that stretch reads MDYLPLFADL…GQLTEAENEL (203 aa). NAD(+) is bound by residues 22–23 and 43–44; these read EV and QT. Ser128 is subject to Phosphoserine. The interval 215–472 is uroporphyrinogen-III C-methyltransferase; it reads GEVALVGAGP…AISPSVVNLA (258 aa). S-adenosyl-L-methionine is bound at residue Pro224. Catalysis depends on Asp247, which acts as the Proton acceptor. Catalysis depends on Lys269, which acts as the Proton donor. S-adenosyl-L-methionine contacts are provided by residues 300 to 302, Ile305, 330 to 331, Met382, and Gly411; these read GGD and TA.

The protein in the N-terminal section; belongs to the precorrin-2 dehydrogenase / sirohydrochlorin ferrochelatase family. It in the C-terminal section; belongs to the precorrin methyltransferase family.

The enzyme catalyses uroporphyrinogen III + 2 S-adenosyl-L-methionine = precorrin-2 + 2 S-adenosyl-L-homocysteine + H(+). The catalysed reaction is precorrin-2 + NAD(+) = sirohydrochlorin + NADH + 2 H(+). It carries out the reaction siroheme + 2 H(+) = sirohydrochlorin + Fe(2+). Its pathway is cofactor biosynthesis; adenosylcobalamin biosynthesis; precorrin-2 from uroporphyrinogen III: step 1/1. It participates in cofactor biosynthesis; adenosylcobalamin biosynthesis; sirohydrochlorin from precorrin-2: step 1/1. The protein operates within porphyrin-containing compound metabolism; siroheme biosynthesis; precorrin-2 from uroporphyrinogen III: step 1/1. It functions in the pathway porphyrin-containing compound metabolism; siroheme biosynthesis; siroheme from sirohydrochlorin: step 1/1. Its pathway is porphyrin-containing compound metabolism; siroheme biosynthesis; sirohydrochlorin from precorrin-2: step 1/1. Functionally, multifunctional enzyme that catalyzes the SAM-dependent methylations of uroporphyrinogen III at position C-2 and C-7 to form precorrin-2 via precorrin-1. Then it catalyzes the NAD-dependent ring dehydrogenation of precorrin-2 to yield sirohydrochlorin. Finally, it catalyzes the ferrochelation of sirohydrochlorin to yield siroheme. This is Siroheme synthase 1 from Yersinia pestis bv. Antiqua (strain Nepal516).